The sequence spans 269 residues: Putative hydro-lyase Swoo_1731 (269 aa).

The protein belongs to the D-glutamate cyclase family.

The chain is Putative hydro-lyase Swoo_1731 from Shewanella woodyi (strain ATCC 51908 / MS32).